The following is an 85-amino-acid chain: MTPLAHILALPVRAYRLIFSPWVGFNCRYQPTCSAYALEALEKHGALRGSWLAARRIGRCHPLGSDGYDPVPEPKDRKPPHSPAG.

A disordered region spans residues 62 to 85 (PLGSDGYDPVPEPKDRKPPHSPAG).

The protein belongs to the UPF0161 family.

The protein localises to the cell inner membrane. Its function is as follows. Could be involved in insertion of integral membrane proteins into the membrane. This Ruegeria pomeroyi (strain ATCC 700808 / DSM 15171 / DSS-3) (Silicibacter pomeroyi) protein is Putative membrane protein insertion efficiency factor.